An 88-amino-acid chain; its full sequence is Small ribosomal subunit protein uS15 (88 aa).

The segment at 1–23 (MIASSVKAEVVKSNARSANDTGS) is disordered. A compositionally biased stretch (polar residues) spans 14–23 (NARSANDTGS).

It belongs to the universal ribosomal protein uS15 family. In terms of assembly, part of the 30S ribosomal subunit. Forms a bridge to the 50S subunit in the 70S ribosome, contacting the 23S rRNA.

In terms of biological role, one of the primary rRNA binding proteins, it binds directly to 16S rRNA where it helps nucleate assembly of the platform of the 30S subunit by binding and bridging several RNA helices of the 16S rRNA. Functionally, forms an intersubunit bridge (bridge B4) with the 23S rRNA of the 50S subunit in the ribosome. The sequence is that of Small ribosomal subunit protein uS15 from Delftia acidovorans (strain DSM 14801 / SPH-1).